The chain runs to 407 residues: Peptidase T (407 aa).

A Zn(2+)-binding site is contributed by histidine 82. Aspartate 84 is an active-site residue. Aspartate 143 serves as a coordination point for Zn(2+). Catalysis depends on glutamate 177, which acts as the Proton acceptor. Zn(2+) is bound by residues glutamate 178, aspartate 200, and histidine 382.

It belongs to the peptidase M20B family. Zn(2+) serves as cofactor.

The protein resides in the cytoplasm. The enzyme catalyses Release of the N-terminal residue from a tripeptide.. Cleaves the N-terminal amino acid of tripeptides. This Streptococcus pyogenes serotype M4 (strain MGAS10750) protein is Peptidase T.